The chain runs to 316 residues: Solute carrier family 25 member 32 (316 aa).

Solcar repeat units follow at residues His-20–Tyr-109, Leu-118–Lys-209, and Leu-222–Phe-306. A run of 6 helical transmembrane segments spans residues Leu-26–Val-46, Val-89–Ile-106, Tyr-123–Val-143, Gly-185–Tyr-203, Tyr-227–Tyr-243, and Gly-281–Tyr-300.

It belongs to the mitochondrial carrier (TC 2.A.29) family.

It is found in the mitochondrion inner membrane. The catalysed reaction is FAD(in) = FAD(out). In terms of biological role, facilitates flavin adenine dinucleotide (FAD) translocation across the mitochondrial inner membrane into the mitochondrial matrix where it acts as a redox cofactor to assist flavoenzyme activities in fundamental metabolic processes including fatty acid beta-oxidation, amino acid and choline metabolism as well as mitochondrial electron transportation. In particular, provides FAD to DLD dehydrogenase of the glycine cleavage system, part of mitochondrial one-carbon metabolic pathway involved in neural tube closure in early embryogenesis. The sequence is that of Solute carrier family 25 member 32 from Mus musculus (Mouse).